The sequence spans 397 residues: Elongation factor Tu (397 aa).

Residues 10–206 (KPHVNIGTIG…AVDEYIPTPE (197 aa)) form the tr-type G domain. Positions 19-26 (GHVDHGKT) are G1. 19-26 (GHVDHGKT) serves as a coordination point for GTP. A Mg(2+)-binding site is contributed by T26. Positions 60-64 (GITIS) are G2. A G3 region spans residues 81-84 (DCPG). Residues 81-85 (DCPGH) and 136-139 (NKAD) each bind GTP. Residues 136–139 (NKAD) are G4. A G5 region spans residues 174-176 (SAL).

This sequence belongs to the TRAFAC class translation factor GTPase superfamily. Classic translation factor GTPase family. EF-Tu/EF-1A subfamily. As to quaternary structure, monomer.

The protein resides in the cytoplasm. It carries out the reaction GTP + H2O = GDP + phosphate + H(+). Functionally, GTP hydrolase that promotes the GTP-dependent binding of aminoacyl-tRNA to the A-site of ribosomes during protein biosynthesis. This chain is Elongation factor Tu, found in Clostridium tetani (strain Massachusetts / E88).